The sequence spans 159 residues: MWKTTDLCDEFENELQICRQPFRSFGKKEQFHGKIATVKVKDDNVLVKEGLQTLPEGTVLVVDGGASTNCALLGDNLAAIAEERKLAGIIVNGYVRDSSELKNINIGILALGTMPNRSVKEGKGERNISLQFGQVEWKPDEYVYVDEDGVIISDKSLHR.

Residues Gly-74 to Leu-77 and Arg-96 contribute to the substrate site. Asp-97 lines the a divalent metal cation pocket.

It belongs to the class II aldolase/RraA-like family. Homotrimer. It depends on a divalent metal cation as a cofactor.

It carries out the reaction 4-hydroxy-4-methyl-2-oxoglutarate = 2 pyruvate. The catalysed reaction is oxaloacetate + H(+) = pyruvate + CO2. Its function is as follows. Catalyzes the aldol cleavage of 4-hydroxy-4-methyl-2-oxoglutarate (HMG) into 2 molecules of pyruvate. Also contains a secondary oxaloacetate (OAA) decarboxylase activity due to the common pyruvate enolate transition state formed following C-C bond cleavage in the retro-aldol and decarboxylation reactions. The chain is Putative 4-hydroxy-4-methyl-2-oxoglutarate aldolase from Bacillus anthracis.